A 135-amino-acid chain; its full sequence is CDGSH iron-sulfur domain-containing protein 2B (135 aa).

Over 1 to 37 (MMLESLARVFKVQLPAYLKRLPIPDSIAGFIRLTVLE) the chain is Lumenal. The chain crosses the membrane as a helical span at residues 38 to 60 (WLRLLPFLGVLALLGYLAIRPFL). Residues 61–135 (PKKKQQKDSL…GPLILKKKEV (75 aa)) are Cytoplasmic-facing. [2Fe-2S] cluster is bound by residues C99, C101, C110, and H114.

This sequence belongs to the CISD protein family. CISD2 subfamily. In terms of assembly, homodimer. The cofactor is [2Fe-2S] cluster.

The protein localises to the endoplasmic reticulum membrane. The protein resides in the mitochondrion outer membrane. Its function is as follows. Regulator of autophagy that contributes to antagonize becn1-mediated cellular autophagy at the endoplasmic reticulum. Participates in the interaction of bcl2 with becn1 and is required for bcl2-mediated depression of endoplasmic reticulum Ca(2+) stores during autophagy. This chain is CDGSH iron-sulfur domain-containing protein 2B (cisd2-b), found in Xenopus laevis (African clawed frog).